We begin with the raw amino-acid sequence, 244 residues long: tRNA pseudouridine synthase C (244 aa).

Asp54 is a catalytic residue.

Belongs to the pseudouridine synthase RluA family.

It carries out the reaction uridine(65) in tRNA = pseudouridine(65) in tRNA. In terms of biological role, responsible for synthesis of pseudouridine from uracil-65 in transfer RNAs. This Vibrio cholerae serotype O1 (strain ATCC 39315 / El Tor Inaba N16961) protein is tRNA pseudouridine synthase C (truC).